Here is a 393-residue protein sequence, read N- to C-terminus: NAD(P)H-quinone oxidoreductase subunit H, chloroplastic (393 aa).

The protein belongs to the complex I 49 kDa subunit family. NDH is composed of at least 16 different subunits, 5 of which are encoded in the nucleus.

It localises to the plastid. Its subcellular location is the chloroplast thylakoid membrane. The catalysed reaction is a plastoquinone + NADH + (n+1) H(+)(in) = a plastoquinol + NAD(+) + n H(+)(out). It carries out the reaction a plastoquinone + NADPH + (n+1) H(+)(in) = a plastoquinol + NADP(+) + n H(+)(out). Its function is as follows. NDH shuttles electrons from NAD(P)H:plastoquinone, via FMN and iron-sulfur (Fe-S) centers, to quinones in the photosynthetic chain and possibly in a chloroplast respiratory chain. The immediate electron acceptor for the enzyme in this species is believed to be plastoquinone. Couples the redox reaction to proton translocation, and thus conserves the redox energy in a proton gradient. This is NAD(P)H-quinone oxidoreductase subunit H, chloroplastic from Carica papaya (Papaya).